The following is a 61-amino-acid chain: MAVPKKKTSKSRKNMRRAHDFLTTQSVSVCPQCKSPKLPHRVCPTCGTYKGKEVLDVAKAS.

Basic residues predominate over residues 1–16 (MAVPKKKTSKSRKNMR). The segment at 1-20 (MAVPKKKTSKSRKNMRRAHD) is disordered.

The protein belongs to the bacterial ribosomal protein bL32 family.

The polypeptide is Large ribosomal subunit protein bL32 (Pelobacter propionicus (strain DSM 2379 / NBRC 103807 / OttBd1)).